The sequence spans 200 residues: MGNSKSGALSKEILEELQLNTKFSEEELCSWYQSFLKDCPTGRITQQQFQSIYAKFFPDTDPKAYAQHVFRSFDSNLDGTLDFKEYVIALHMTTAGKTNQKLEWAFSLYDVDGNGTISKNEVLEIVMAIFKMITPEDVKLLPDDENTPEKRAEKIWKYFGKNDDDKLTEKEFIEGTLANKEILRLIQFEPQKVKEKMKNA.

G2 carries the N-myristoyl glycine lipid modification. EF-hand domains follow at residues 25–60, 61–96, 97–132, and 147–182; these read EEEL…FPDT, DPKA…TTAG, KTNQ…IFKM, and TPEK…NKEI. At C39 the chain carries Cysteine sulfenic acid (-SOH). Positions 74, 76, 78, 80, 85, 110, 112, 114, 116, and 121 each coordinate Ca(2+). The tract at residues 189 to 192 is interaction with GRK1; it reads EPQK.

This sequence belongs to the recoverin family. As to quaternary structure, homodimer; disulfide-linked. Homodimerization is caused by prolonged intense illumination. May form a complex composed of RHO, GRK1 and RCVRN in a Ca(2+)-dependent manner; RCVRN prevents the interaction between GRK1 and RHO. Interacts (via C-terminus) with GRK1 (via N-terminus); the interaction is Ca(2+)-dependent. In terms of processing, the N-terminal glycine is linked to one of four different types of acyl groups. The most abundant is myristoleate (14:1), but 14:0, 14:2, and 12:0 acyl residues are also present. The Ca(2+) induced exposure of the myristoyl group, known as the calcium-myristoyl switch, promotes RCVRN binding to the photoreceptor cell membranes only when intracellular Ca(2+) concentration is high. Post-translationally, oxidation on Cys-39 occurs in response to prolonged intense illumination and results in the formation of disulfide homodimers, and to a lesser extent disulfide-linked heterodimers. In terms of tissue distribution, retina and pineal gland.

It localises to the photoreceptor inner segment. The protein resides in the cell projection. It is found in the cilium. The protein localises to the photoreceptor outer segment. Its subcellular location is the photoreceptor outer segment membrane. It localises to the perikaryon. In terms of biological role, acts as a calcium sensor and regulates phototransduction of cone and rod photoreceptor cells. Modulates light sensitivity of cone photoreceptor in dark and dim conditions. In response to high Ca(2+) levels induced by low light levels, prolongs RHO/rhodopsin activation in rod photoreceptor cells by binding to and inhibiting GRK1-mediated phosphorylation of RHO/rhodopsin. Plays a role in scotopic vision/enhances vision in dim light by enhancing signal transfer between rod photoreceptors and rod bipolar cells. Improves rod photoreceptor sensitivity in dim light and mediates response of rod photoreceptors to facilitate detection of change and motion in bright light. This Homo sapiens (Human) protein is Recoverin (RCVRN).